Consider the following 105-residue polypeptide: Nucleoid-associated protein PTH_0052 (105 aa).

This sequence belongs to the YbaB/EbfC family. Homodimer.

The protein resides in the cytoplasm. It is found in the nucleoid. Functionally, binds to DNA and alters its conformation. May be involved in regulation of gene expression, nucleoid organization and DNA protection. This chain is Nucleoid-associated protein PTH_0052, found in Pelotomaculum thermopropionicum (strain DSM 13744 / JCM 10971 / SI).